The chain runs to 313 residues: Ribosomal RNA small subunit methyltransferase H (313 aa).

S-adenosyl-L-methionine contacts are provided by residues 35-37 (GGH), Asp55, Phe79, Asp101, and Gln108.

This sequence belongs to the methyltransferase superfamily. RsmH family.

Its subcellular location is the cytoplasm. The enzyme catalyses cytidine(1402) in 16S rRNA + S-adenosyl-L-methionine = N(4)-methylcytidine(1402) in 16S rRNA + S-adenosyl-L-homocysteine + H(+). Its function is as follows. Specifically methylates the N4 position of cytidine in position 1402 (C1402) of 16S rRNA. In Salmonella typhi, this protein is Ribosomal RNA small subunit methyltransferase H.